A 215-amino-acid chain; its full sequence is Probable ribosome-binding factor A, chloroplastic (215 aa).

The N-terminal 52 residues, 1-52, are a transit peptide targeting the chloroplast; sequence MPNLLHTNQSHFFFLHHPPIYTVSSKTQAFHFPQSMAPVNLRTNLSVRRTVR. Over residues 183–192 the composition is skewed to basic and acidic residues; the sequence is KGSGEGKTEP. The segment at 183–210 is disordered; that stretch reads KGSGEGKTEPSDSTEDDQDWEVDDPDED. The span at 194–210 shows a compositional bias: acidic residues; it reads DSTEDDQDWEVDDPDED.

Belongs to the RbfA family.

Its subcellular location is the plastid. It is found in the chloroplast. This is Probable ribosome-binding factor A, chloroplastic from Arabidopsis thaliana (Mouse-ear cress).